Consider the following 521-residue polypeptide: Cytochrome P450 monooxygenase ABA2 (521 aa).

The chain crosses the membrane as a helical span at residues 15-35; it reads AGHLGMAVTFTILVAFTIHVL. The N-linked (GlcNAc...) asparagine glycan is linked to Asn366. Residue Cys458 coordinates heme.

Belongs to the cytochrome P450 family. It depends on heme as a cofactor.

The protein localises to the membrane. The protein operates within hormone biosynthesis. Its function is as follows. Cytochrome P450 monooxygenase involved in the biosynthesis of abscisic acid (ABA), a phytohormone that acts antagonistically toward salicylic acid (SA), jasmonic acid (JA) and ethylene (ETH) signaling, to impede plant defense responses. During pathogen-host interaction, ABA plays a dual role in disease severity by increasing plant susceptibility and accelerating pathogenesis in the fungus itself. The first step of the pathway catalyzes the reaction from farnesyl diphosphate to alpha-ionylideneethane performed by the alpha-ionylideneethane synthase ABA3 via a three-step reaction mechanism involving 2 neutral intermediates, beta-farnesene and allofarnesene. The cytochrome P450 monooxygenase ABA1 might then be involved in the conversion of alpha-ionylideneethane to alpha-ionylideneacetic acid. Alpha-ionylideneacetic acid is further converted to abscisic acid in 2 steps involving the cytochrome P450 monooxygenase ABA2 and the short-chain dehydrogenase/reductase ABA4, via the intermediates 1'-deoxy-ABA or 1',4'-trans-diol-ABA, depending on the order of action of these 2 enzymes. ABA2 is responsible for the hydroxylation of carbon atom C-1' and ABA4 might be involved in the oxidation of the C-4' carbon atom. The polypeptide is Cytochrome P450 monooxygenase ABA2 (Pyricularia oryzae (strain 70-15 / ATCC MYA-4617 / FGSC 8958) (Rice blast fungus)).